The sequence spans 402 residues: Multidrug resistance protein MdtH (402 aa).

Residues 1–12 (MSRVSQARNLGK) lie on the Cytoplasmic side of the membrane. A helical transmembrane segment spans residues 13–33 (YFLLIDNMLVVLGFFVVFPLI). Residues 34 to 98 (SIRFVDQMGW…GFATMGIAHE (65 aa)) lie on the Periplasmic side of the membrane. A helical membrane pass occupies residues 99–116 (PWLLWFSCFLSGLGGTLF). Residues 117–138 (DPPRSALVVKLIRPEQRGRFFS) are Cytoplasmic-facing. The chain crosses the membrane as a helical span at residues 139-159 (LLMMQDSAGAVIGALLGSWLL). The Periplasmic segment spans residues 160–164 (QYDFR). A helical transmembrane segment spans residues 165–185 (LVCATGAILFILCALFNAWLL). Residues 186–213 (PAWKLSTVRTPVREGMRRVMSDKRFVTY) lie on the Cytoplasmic side of the membrane. A helical membrane pass occupies residues 214 to 234 (VLTLAGYYMLAVQVMLMLPIM). Over 235–243 (VNDIAGSPA) the chain is Periplasmic. The helical transmembrane segment at 244 to 264 (AVKWMYAIEACLSLTLLYPIA) threads the bilayer. Topologically, residues 265-276 (RWSEKRFRLEHR) are cytoplasmic. The chain crosses the membrane as a helical span at residues 277 to 297 (LMAGLLVMSLSMIPIGMVGNL). Topologically, residues 298-299 (QQ) are periplasmic. A helical transmembrane segment spans residues 300 to 320 (LFTLICAFYIGSVIAEPARET). At 321 to 339 (LSASLADARARGSYMGFSR) the chain is on the cytoplasmic side. The chain crosses the membrane as a helical span at residues 340–360 (LGLAIGGAIGYIGGGWLFDMG). Residues 361–367 (KALAQPE) lie on the Periplasmic side of the membrane. Residues 368-388 (LPWMMLGIIGFITFLALGWQF) traverse the membrane as a helical segment. Residues 389–402 (SHKRTPRRMLEPGA) are Cytoplasmic-facing.

This sequence belongs to the major facilitator superfamily. DHA1 family. MdtH (TC 2.A.1.2.21) subfamily.

It localises to the cell inner membrane. The protein is Multidrug resistance protein MdtH of Salmonella schwarzengrund (strain CVM19633).